Consider the following 1434-residue polypeptide: Probable ATP-dependent RNA helicase spindle-E (1434 aa).

One can recognise a Helicase ATP-binding domain in the interval 125 to 292 (LAAINAHPVV…FTTTNSIPPV (168 aa)). 138-145 (GETGCGKT) is an ATP binding site. The short motif at 238-241 (DEVH) is the DEAH box element. A Helicase C-terminal domain is found at 354–526 (QSRQSYDEAL…NSVLKAKVLN (173 aa)). In terms of domain architecture, Tudor spans 938–1001 (ASAIAKGMMV…RLMPRELTEQ (64 aa)).

It belongs to the DEAD box helicase family. DEAH subfamily.

The protein resides in the cytoplasm. Its subcellular location is the perinuclear region. The protein localises to the cytoplasmic ribonucleoprotein granule. It catalyses the reaction ATP + H2O = ADP + phosphate + H(+). Functionally, probable ATP-binding RNA helicase which plays a central role during spermatogenesis and oogenesis by repressing transposable elements and preventing their mobilization, which is essential for the germline integrity. Acts via the piRNA metabolic process, which mediates the repression of transposable elements during meiosis by forming complexes composed of piRNAs and Piwi and govern the methylation and subsequent repression of transposons. Involved in the repression of LTR retrotransposon copia. Also involved in telomere regulation by repressing specialized telomeric retroelements HeT-A, TAHRE, and TART; Drosophila telomeres being maintained by transposition of specialized telomeric retroelements. Involved in telomeric trans-silencing, a repression mechanism by which a transposon or a transgene inserted in subtelomeric heterochromatin has the capacity to repress in trans in the female germline, a homologous transposon, or transgene located in euchromatin. Involved in the repression of testis-expressed Stellate genes by the homologous Su(Ste) repeats. Required for anteroposterior and dorsoventral axis formation during oogenesis. Key component of the perinuclear meiotic nuage, an electron dense structure involved in the post-transcriptional regulation of transposons and mRNAs; required for recruitment of other nuage comonents including vas, krimp, aub and mael. May have a role in production of piwi-interacting RNA (piRNA). This Drosophila melanogaster (Fruit fly) protein is Probable ATP-dependent RNA helicase spindle-E.